The following is a 561-amino-acid chain: Arginine--tRNA ligase (561 aa).

Positions 108–118 (PNVAKEMHVGH) match the 'HIGH' region motif.

It belongs to the class-I aminoacyl-tRNA synthetase family. In terms of assembly, monomer.

Its subcellular location is the cytoplasm. The enzyme catalyses tRNA(Arg) + L-arginine + ATP = L-arginyl-tRNA(Arg) + AMP + diphosphate. This is Arginine--tRNA ligase from Haemophilus ducreyi (strain 35000HP / ATCC 700724).